A 394-amino-acid chain; its full sequence is Tubulin-like protein CetZ4 (394 aa).

GTP contacts are provided by residues 10-14 (QAGGK), 110-112 (GTG), E142, N169, and N187.

This sequence belongs to the CetZ family.

The protein resides in the cytoplasm. Its function is as follows. Involved in cell shape control. The sequence is that of Tubulin-like protein CetZ4 from Haloferax volcanii (strain ATCC 29605 / DSM 3757 / JCM 8879 / NBRC 14742 / NCIMB 2012 / VKM B-1768 / DS2) (Halobacterium volcanii).